A 268-amino-acid polypeptide reads, in one-letter code: Speedy protein E4A (268 aa).

Disordered regions lie at residues 1 to 26 (MGEG…LGFV) and 43 to 97 (LCSE…LDSE). Positions 43–52 (LCSEEQSPQP) are enriched in polar residues. Residues 134-265 (PEHHKVFTKL…DLWVWARDRT (132 aa)) form a speedy/Ringo box; Required for CDK-binding region.

It belongs to the Speedy/Ringo family. As to quaternary structure, interacts with CDK1. Does not interact with CDK2 in vivo. Testis-specific.

Its subcellular location is the nucleus. In terms of biological role, promotes progression through the cell cycle via binding and activation of CDK1. The polypeptide is Speedy protein E4A (Mus musculus (Mouse)).